Reading from the N-terminus, the 348-residue chain is Dihydroorotase (348 aa).

Positions 17 and 19 each coordinate Zn(2+). Substrate is bound by residues 19 to 21 and Asn-45; that span reads HLR. Zn(2+) is bound by residues Lys-103, His-140, and His-178. Residue Lys-103 is modified to N6-carboxylysine. His-140 lines the substrate pocket. Leu-223 provides a ligand contact to substrate. Asp-251 provides a ligand contact to Zn(2+). Residue Asp-251 is part of the active site. The substrate site is built by His-255 and Ala-267.

This sequence belongs to the metallo-dependent hydrolases superfamily. DHOase family. Class II DHOase subfamily. Homodimer. Requires Zn(2+) as cofactor.

It catalyses the reaction (S)-dihydroorotate + H2O = N-carbamoyl-L-aspartate + H(+). The protein operates within pyrimidine metabolism; UMP biosynthesis via de novo pathway; (S)-dihydroorotate from bicarbonate: step 3/3. In terms of biological role, catalyzes the reversible cyclization of carbamoyl aspartate to dihydroorotate. This is Dihydroorotase from Escherichia coli O17:K52:H18 (strain UMN026 / ExPEC).